The following is a 141-amino-acid chain: Large ribosomal subunit protein uL16c (141 aa).

This sequence belongs to the universal ribosomal protein uL16 family. As to quaternary structure, part of the 50S ribosomal subunit.

Its subcellular location is the plastid. The protein resides in the chloroplast. This is Large ribosomal subunit protein uL16c from Zygnema circumcarinatum (Green alga).